Here is a 267-residue protein sequence, read N- to C-terminus: NAD kinase 1 (267 aa).

Catalysis depends on D45, which acts as the Proton acceptor. Residues 45-46, 122-123, R149, D151, and A186 each bind NAD(+); these read DG and NE.

Belongs to the NAD kinase family. A divalent metal cation is required as a cofactor.

Its subcellular location is the cytoplasm. It carries out the reaction NAD(+) + ATP = ADP + NADP(+) + H(+). Functionally, involved in the regulation of the intracellular balance of NAD and NADP, and is a key enzyme in the biosynthesis of NADP. Catalyzes specifically the phosphorylation on 2'-hydroxyl of the adenosine moiety of NAD to yield NADP. The polypeptide is NAD kinase 1 (Oceanobacillus iheyensis (strain DSM 14371 / CIP 107618 / JCM 11309 / KCTC 3954 / HTE831)).